The primary structure comprises 187 residues: Ribosome-recycling factor (187 aa).

It belongs to the RRF family.

The protein resides in the cytoplasm. Functionally, responsible for the release of ribosomes from messenger RNA at the termination of protein biosynthesis. May increase the efficiency of translation by recycling ribosomes from one round of translation to another. The sequence is that of Ribosome-recycling factor from Rhodopseudomonas palustris (strain BisA53).